The following is a 750-amino-acid chain: Tegument protein UL46 homolog (750 aa).

4 disordered regions span residues 437–484, 525–593, 610–669, and 692–750; these read FCCP…SPRT, QRSD…DYMR, YTPY…EVVY, and SASR…VSSL. Positions 465–484 are enriched in polar residues; it reads LRSSRQLPTSPPSNIVSPRT. Low complexity predominate over residues 528–540; it reads DSSSSDNSTCSST. Residues 541-553 show a composition bias toward polar residues; sequence ETQYITLPSTPSP. Basic and acidic residues-rich tracts occupy residues 710-727 and 739-750; these read VCRE…DGFI and KHPDQTERVSSL.

Belongs to the herpesviridae HHV-1 VP11/12 protein family.

It localises to the virion tegument. The protein localises to the host cell membrane. Modulates alpha trans-inducing factor-dependent activation of alpha genes. The chain is Tegument protein UL46 homolog from Equine herpesvirus 1 (strain V592) (EHV-1).